Here is a 145-residue protein sequence, read N- to C-terminus: NADH-ubiquinone oxidoreductase subunit 8 (145 aa).

2 consecutive 4Fe-4S ferredoxin-type domains span residues 43 to 73 (LRFY…VRVG) and 83 to 112 (DWFT…HSLF). Residues cysteine 53, cysteine 56, cysteine 59, cysteine 63, cysteine 92, cysteine 95, cysteine 98, and cysteine 102 each contribute to the [4Fe-4S] cluster site.

This sequence belongs to the complex I 23 kDa subunit family. Requires [4Fe-4S] cluster as cofactor.

It localises to the mitochondrion. It catalyses the reaction a ubiquinone + NADH + 5 H(+)(in) = a ubiquinol + NAD(+) + 4 H(+)(out). Functionally, core subunit of the mitochondrial membrane respiratory chain NADH dehydrogenase (Complex I) that is believed to belong to the minimal assembly required for catalysis. Complex I functions in the transfer of electrons from NADH to the respiratory chain. The immediate electron acceptor for the enzyme is believed to be ubiquinone. May donate electrons to ubiquinone. The protein is NADH-ubiquinone oxidoreductase subunit 8 (M-ISP1) of Trypanosoma brucei brucei.